Reading from the N-terminus, the 54-residue chain is UPF0391 membrane protein Mpe_A2904 (54 aa).

2 helical membrane passes run 5–25 (AVVF…GIAA) and 30–50 (IAKI…LFGL).

Belongs to the UPF0391 family.

It is found in the cell membrane. In Methylibium petroleiphilum (strain ATCC BAA-1232 / LMG 22953 / PM1), this protein is UPF0391 membrane protein Mpe_A2904.